Reading from the N-terminus, the 498-residue chain is Putative antiporter subunit mnhD2 (498 aa).

The next 14 membrane-spanning stretches (helical) occupy residues 2-22, 32-52, 78-98, 108-128, 130-150, 161-181, 209-229, 240-260, 271-291, 308-328, 330-350, 369-389, 403-423, and 451-471; these read LSNL…ILVF, YLYL…LIYV, LSLI…AYGF, YHLP…FLTS, LFNL…LITL, IIYV…IGLL, ISLI…FMWL, LAAL…IRFF, IHPL…IGVI, IGFI…GAIF, LVND…LVYI, FGVA…FSGF, GNYI…YSLF, and ILSI…VVLN.

The protein belongs to the CPA3 antiporters (TC 2.A.63) subunit D family. As to quaternary structure, may form a heterooligomeric complex that consists of seven subunits: mnhA2, mnhB2, mnhC2, mnhD2, mnhE2, mnhF2 and mnhG2.

The protein localises to the cell membrane. The chain is Putative antiporter subunit mnhD2 (mnhD2) from Staphylococcus aureus (strain JH1).